The chain runs to 576 residues: MLPHVVLTFRRLGCALASCRLAPARHRGSGLLHTAPVARSDRSAPVFTRALAFGDRIALVDQHGRHTYRELYSRSLRLSQEICRLCGCVGGDLREERVSFLCANDASYVVAQWASWMSGGVAVPLYRKHPAAQLEYVICDSQSSVVLASQEYLELLSPVVRKLGVPLLPLTPAIYTGAVEEPAEVPVPEQGWRNKGAMIIYTSGTTGRPKGVLSTHQNIRAVVTGLVHKWAWTKDDVILHVLPLHHVHGVVNALLCPLWVGATCVMMPEFSPQQVWEKFLSSETPRINVFMAVPTIYTKLMEYYDRHFTQPHAQDFLRAVCEEKIRLMVSGSAALPLPVLEKWKNITGHTLLERYGMTEIGMALSGPLTTAVRLPGSVGTPLPGVQVRIVSENPQREACSYTIHAEGDERGTKVTPGFEEKEGELLVRGPSVFREYWNKPEETKSAFTLDGWFKTGDTVVFKDGQYWIRGRTSVDIIKTGGYKVSALEVEWHLLAHPSITDVAVIGVPDMTWGQRVTAVVTLREGHSLSHRELKEWARNVLAPYAVPSELVLVEEIPRNQMGKIDKKALIRHFHPS.

The N-terminal 83 residues, 1–83, are a transit peptide targeting the mitochondrion; sequence MLPHVVLTFR…RSLRLSQEIC (83 aa). ATP-binding positions include 202-210, D457, R471, and K563; that span reads TSGTTGRPK.

Belongs to the ATP-dependent AMP-binding enzyme family.

Its subcellular location is the mitochondrion. It carries out the reaction tetracosanoate + ATP + CoA = tetracosanoyl-CoA + AMP + diphosphate. The enzyme catalyses malonate + ATP + CoA = malonyl-CoA + AMP + diphosphate. Functionally, catalyzes the initial reaction in intramitochondrial fatty acid synthesis, by activating malonate and methylmalonate, but not acetate, into their respective CoA thioester. May have some preference toward very-long-chain substrates. The sequence is that of Malonate--CoA ligase ACSF3, mitochondrial from Homo sapiens (Human).